The chain runs to 92 residues: MTQQSNSADRKPRGKGPKRPRKPKVDPFSIGELEITDYKDVKMLRRFVSDTGKILPRRRTGLSAKHQRRIAQTIKVARQLALLPYTEKLVRK.

A disordered region spans residues 1–27 (MTQQSNSADRKPRGKGPKRPRKPKVDP). Basic residues predominate over residues 12 to 22 (PRGKGPKRPRK).

It belongs to the bacterial ribosomal protein bS18 family. In terms of assembly, part of the 30S ribosomal subunit. Forms a tight heterodimer with protein bS6.

Functionally, binds as a heterodimer with protein bS6 to the central domain of the 16S rRNA, where it helps stabilize the platform of the 30S subunit. The protein is Small ribosomal subunit protein bS18 of Deinococcus deserti (strain DSM 17065 / CIP 109153 / LMG 22923 / VCD115).